The chain runs to 1166 residues: UDP-N-acetylglucosamine transferase subunit ALG13 (1166 aa).

The interval 1 to 125 (MKRAFVTVGT…LHKEGHLFYC (125 aa)) is glycosyltransferase activity. Positions 126 to 394 (TCRVLSCPAP…GSRRNKHHAL (269 aa)) are deubiquitinase activity. The OTU domain occupies 225–346 (LFRKVVAKDA…NGHYDSVYSK (122 aa)). Residue D233 is the For deubiquitinase activity of the active site. The Nucleophile; for deubiquitinase activity role is filled by C236. H339 serves as the catalytic For deubiquitinase activity. The interval 393 to 438 (ALTASVEGSSDQKSSTEDRTEEAAACSSAASTPEGNKQGTERQKVP) is disordered. The Tudor domain maps to 486-546 (YYFLGDKCQV…RPVNQVALLP (61 aa)). 3 stretches are compositionally biased toward pro residues: residues 921 to 930 (PPPLPPPPPA), 941 to 957 (PLPP…PPYS), and 1004 to 1034 (QPQP…PPPQ). Disordered regions lie at residues 921–966 (PPPL…SDLP) and 998–1056 (QQQL…EQPL).

This sequence belongs to the glycosyltransferase 28 family. As to quaternary structure, forms with ALG14 the active heterodimeric UDP-N-acetylglucosamine transferase complex. In terms of assembly, not able to interact with ALG14 to form an active UDP-N-acetylglucosamine transferase complex.

Its subcellular location is the endoplasmic reticulum membrane. It catalyses the reaction an N-acetyl-alpha-D-glucosaminyl-diphospho-di-trans,poly-cis-dolichol + UDP-N-acetyl-alpha-D-glucosamine = an N,N'-diacetylchitobiosyl-diphospho-di-trans,poly-cis-dolichol + UDP + H(+). Its pathway is protein modification; protein glycosylation. In terms of biological role, catalytic subunit of the UDP-N-acetylglucosamine transferase complex that operates in the biosynthetic pathway of dolichol-linked oligosaccharides, the glycan precursors employed in protein asparagine (N)-glycosylation. The assembly of dolichol-linked oligosaccharides begins on the cytosolic side of the endoplasmic reticulum membrane and finishes in its lumen. The sequential addition of sugars to dolichol pyrophosphate produces dolichol-linked oligosaccharides containing fourteen sugars, including two GlcNAcs, nine mannoses and three glucoses. Once assembled, the oligosaccharide is transferred from the lipid to nascent proteins by oligosaccharyltransferases. On the cytoplasmic face of the endoplasmic reticulum, the dimeric ALG13/ALG14 complex catalyzes the second step of dolichol pyrophosphate biosynthesis, transferring a beta1,4-linked N-acetylglucosamine (GlcNAc) from UDP-GlcNAc to GlcNAc-pyrophosphatedolichol (Gn-PDol) to produce N,N'-diacetylchitobiosyl diphosphodolichol. N,N'-diacetylchitobiosyl diphosphodolichol is a substrate for ALG1, the following enzyme in the biosynthetic pathway. No glycosyltransferase or deubiquitinase activity is detected for this potential multifunctional enzyme. This is UDP-N-acetylglucosamine transferase subunit ALG13 from Mus musculus (Mouse).